Consider the following 395-residue polypeptide: Elongation factor Tu (395 aa).

In terms of domain architecture, tr-type G spans 10–204; sequence KPHLNIGTIG…AVDTWIELPE (195 aa). Residues 19–26 form a G1 region; sequence GHVDHGKT. A GTP-binding site is contributed by 19 to 26; it reads GHVDHGKT. T26 contacts Mg(2+). The interval 60–64 is G2; sequence GITIN. A G3 region spans residues 81–84; the sequence is DCPG. Residues 81-85 and 136-139 contribute to the GTP site; these read DCPGH and NKVD. The G4 stretch occupies residues 136–139; that stretch reads NKVD. Residues 174–176 form a G5 region; it reads SAL.

The protein belongs to the TRAFAC class translation factor GTPase superfamily. Classic translation factor GTPase family. EF-Tu/EF-1A subfamily. Monomer.

Its subcellular location is the cytoplasm. The enzyme catalyses GTP + H2O = GDP + phosphate + H(+). Functionally, GTP hydrolase that promotes the GTP-dependent binding of aminoacyl-tRNA to the A-site of ribosomes during protein biosynthesis. This chain is Elongation factor Tu, found in Christiangramia forsetii (strain DSM 17595 / CGMCC 1.15422 / KT0803) (Gramella forsetii).